We begin with the raw amino-acid sequence, 206 residues long: Protein-methionine-sulfoxide reductase heme-binding subunit MsrQ (206 aa).

Transmembrane regions (helical) follow at residues 7–27 (IIIH…LLSG), 43–63 (FLGF…KVFY), 77–97 (LGLW…ALEL), 112–132 (GYLI…LSSW), 142–162 (WWFY…IHYV), and 172–192 (SMLY…GLFI).

Belongs to the MsrQ family. In terms of assembly, heterodimer of a catalytic subunit (MsrP) and a heme-binding subunit (MsrQ). FMN serves as cofactor. Requires heme b as cofactor.

The protein localises to the cell inner membrane. Functionally, part of the MsrPQ system that repairs oxidized periplasmic proteins containing methionine sulfoxide residues (Met-O), using respiratory chain electrons. Thus protects these proteins from oxidative-stress damage caused by reactive species of oxygen and chlorine generated by the host defense mechanisms. MsrPQ is essential for the maintenance of envelope integrity under bleach stress, rescuing a wide series of structurally unrelated periplasmic proteins from methionine oxidation. MsrQ provides electrons for reduction to the reductase catalytic subunit MsrP, using the quinone pool of the respiratory chain. The chain is Protein-methionine-sulfoxide reductase heme-binding subunit MsrQ from Pasteurella multocida (strain Pm70).